We begin with the raw amino-acid sequence, 120 residues long: Ribosome-binding factor A (120 aa).

The protein belongs to the RbfA family. In terms of assembly, monomer. Binds 30S ribosomal subunits, but not 50S ribosomal subunits or 70S ribosomes.

It is found in the cytoplasm. Functionally, one of several proteins that assist in the late maturation steps of the functional core of the 30S ribosomal subunit. Associates with free 30S ribosomal subunits (but not with 30S subunits that are part of 70S ribosomes or polysomes). Required for efficient processing of 16S rRNA. May interact with the 5'-terminal helix region of 16S rRNA. This Clostridium botulinum (strain Okra / Type B1) protein is Ribosome-binding factor A.